Reading from the N-terminus, the 288-residue chain is 4-hydroxybenzoate octaprenyltransferase (288 aa).

8 helical membrane-spanning segments follow: residues 23–43 (IGSL…GRGI), 46–66 (AKIL…GCVV), 98–118 (ILFV…NSMT), 141–161 (LPQV…FAAV), 163–183 (ESLP…TVAY), 213–233 (LIIG…GWLM), 234–254 (NLGG…THQQ), and 268–288 (AFLN…ISYW).

This sequence belongs to the UbiA prenyltransferase family. It depends on Mg(2+) as a cofactor.

It localises to the cell inner membrane. The enzyme catalyses all-trans-octaprenyl diphosphate + 4-hydroxybenzoate = 4-hydroxy-3-(all-trans-octaprenyl)benzoate + diphosphate. It participates in cofactor biosynthesis; ubiquinone biosynthesis. Its function is as follows. Catalyzes the prenylation of para-hydroxybenzoate (PHB) with an all-trans polyprenyl group. Mediates the second step in the final reaction sequence of ubiquinone-8 (UQ-8) biosynthesis, which is the condensation of the polyisoprenoid side chain with PHB, generating the first membrane-bound Q intermediate 3-octaprenyl-4-hydroxybenzoate. The polypeptide is 4-hydroxybenzoate octaprenyltransferase (Yersinia pseudotuberculosis serotype O:1b (strain IP 31758)).